Here is a 329-residue protein sequence, read N- to C-terminus: 3-isopropylmalate dehydrogenase (329 aa).

Substrate-binding residues include Arg-83, Arg-93, Arg-114, and Asp-200. Mg(2+)-binding residues include Asp-200, Asp-224, and Asp-228. Position 257–269 (Gly-257–Asn-269) interacts with NAD(+).

Belongs to the isocitrate and isopropylmalate dehydrogenases family. Homotetramer. Requires Mg(2+) as cofactor. It depends on Mn(2+) as a cofactor.

It localises to the cytoplasm. It carries out the reaction (2R,3S)-3-isopropylmalate + NAD(+) = 4-methyl-2-oxopentanoate + CO2 + NADH. It participates in amino-acid biosynthesis; L-leucine biosynthesis; L-leucine from 3-methyl-2-oxobutanoate: step 3/4. Its function is as follows. Catalyzes the oxidation of 3-carboxy-2-hydroxy-4-methylpentanoate (3-isopropylmalate) to 3-carboxy-4-methyl-2-oxopentanoate. The product decarboxylates to 4-methyl-2 oxopentanoate. This chain is 3-isopropylmalate dehydrogenase (leuB), found in Methanothermobacter thermautotrophicus (strain ATCC 29096 / DSM 1053 / JCM 10044 / NBRC 100330 / Delta H) (Methanobacterium thermoautotrophicum).